A 409-amino-acid chain; its full sequence is MASGKATGKTDAPAPVIKLGGPKPPKVGSSGNASWFQAIKANKLNIPPPKFEGSGVPDNENLKSSQQHGYWRRQATFKPGKGGRKPVPDAWYFYYTGTGPAANLNWGDSQDGIVWVAGKGADTKFRSNQGTRDSDKFDQYPLRFSDGGPDGNFRWDFIPLNGGRSGRSTAASSAASSRAPSREVSRGRRSGSEDDLIARAARIIQDQQKKGSRITKAKADEMAHRRYCKRTIPPNYKVDQVFGPRTKGKEGNFGDDKMNEEGIKDGRVTAMLNLVPSSHACLFGSRVTPKLQPDGLHLKFEFTTVVPRDDPQFDNYVKICDQCVDGVGTRPKDDEPRPKSRSSSRPATRGNSPAPRQQRPKKEKKPKKHDDEVDKALTSDEERNNAQLEFYDEPKVINWGDAALGENEL.

Disordered regions lie at residues Met1–Asn32, Ile46–His68, Arg164–Leu196, and Val238–Met258. Over residues Pro15–Gly31 the composition is skewed to low complexity. The tract at residues Ser29 to Leu160 is RNA-binding. In terms of domain architecture, CoV N NTD spans Gly31 to Asp156. Low complexity predominate over residues Gly166 to Ala179. 2 stretches are compositionally biased toward basic and acidic residues: residues Pro180–Ser192 and Lys247–Met258. Ser190 and Ser192 each carry phosphoserine; by host. The 117-residue stretch at Thr215–Pro331 folds into the CoV N CTD domain. The dimerization stretch occupies residues Arg226–Asp333. The cysteines at positions 320 and 323 are disulfide-linked. The disordered stretch occupies residues Gly326–Leu409. The segment covering Gln358–Lys367 has biased composition (basic residues). The segment covering Lys368–Asn384 has biased composition (basic and acidic residues). Thr378 is modified (phosphothreonine; by host). Position 379 is a phosphoserine; by host (Ser379).

Belongs to the gammacoronavirus nucleocapsid protein family. As to quaternary structure, homooligomer. Both monomeric and oligomeric forms interact with RNA. Interacts with protein M. Interacts with NSP3; this interaction serves to tether the genome to the newly translated replicase-transcriptase complex at a very early stage of infection. Post-translationally, ADP-ribosylated. The ADP-ribosylation is retained in the virion during infection. Phosphorylated on serine and threonine residues.

It is found in the virion. Its subcellular location is the host endoplasmic reticulum-Golgi intermediate compartment. The protein localises to the host Golgi apparatus. Packages the positive strand viral genome RNA into a helical ribonucleocapsid (RNP) and plays a fundamental role during virion assembly through its interactions with the viral genome and membrane protein M. Plays an important role in enhancing the efficiency of subgenomic viral RNA transcription as well as viral replication. In Avian infectious bronchitis virus (strain M41) (IBV), this protein is Nucleoprotein.